Reading from the N-terminus, the 230-residue chain is Cell division ATP-binding protein FtsE (230 aa).

In terms of domain architecture, ABC transporter spans 3–228 (ITLDHVTKQY…RDEQRGVYGM (226 aa)). Position 37-44 (37-44 (GPSGSGKS)) interacts with ATP.

The protein belongs to the ABC transporter superfamily. In terms of assembly, homodimer. Forms a membrane-associated complex with FtsX.

The protein resides in the cell membrane. Its function is as follows. Part of the ABC transporter FtsEX involved in cellular division. Has ATPase activity. This chain is Cell division ATP-binding protein FtsE, found in Mycobacterium tuberculosis (strain ATCC 25618 / H37Rv).